The following is a 996-amino-acid chain: Leucine-rich repeat receptor-like kinase protein THICK TASSEL DWARF1 (996 aa).

Positions M1–A26 are cleaved as a signal peptide. 21 LRR repeats span residues T78 to L103, D104 to M127, P128 to A151, F153 to A178, S180 to D201, L202 to L226, L251 to L275, S276 to L299, T300 to L323, N325 to F349, E351 to N371, G372 to G395, N397 to C419, K420 to L443, Q445 to G466, D467 to L490, P491 to L514, N516 to C538, A539 to L562, K563 to M586, and T587 to V611. Residues K646–A666 form a helical membrane-spanning segment. In terms of domain architecture, Protein kinase spans L703–S978. ATP contacts are provided by residues I709–V717 and K731. The Proton acceptor role is filled by D828.

The protein belongs to the protein kinase superfamily. Ser/Thr protein kinase family. In terms of tissue distribution, highly expressed in the apex of the vegetative seedlings. Lower expression in young leaves, ears and tassels, embryos and roots. Not expressed in the shoot meristem itself. Detected in the three outermost layers of the inflorescence meristem, and on its flanks at positions of prospective spikelet pair meristems. Not confined to meristematic cells but also detected in primordia of glumes, lemmas and stamens.

It is found in the membrane. The catalysed reaction is L-seryl-[protein] + ATP = O-phospho-L-seryl-[protein] + ADP + H(+). It catalyses the reaction L-threonyl-[protein] + ATP = O-phospho-L-threonyl-[protein] + ADP + H(+). Its function is as follows. Receptor-like kinase protein that regulates meristem size during inflorescence and flower development. Promotes vegetative meristem growth and restricts inflorescence and floral meristem growth. Based on additive and synergistic phenotypes of double mutants, it is probable that unlike CLV1 and CLV2 in A.thaliana, TD1 and FAE2 do not function exclusively in a single pathway. However, KN-1 and TD1 do function in a linear pathway to maintain vegetative meristem homeostasis, but they may interact with different partners during development. In Zea mays (Maize), this protein is Leucine-rich repeat receptor-like kinase protein THICK TASSEL DWARF1 (TD1).